The sequence spans 432 residues: MANVVVIGAQWGDEGKGKVVDIYTEFADDVVRYQGGNNAGHTLVVGDEKVILHLIPSGILHEGKRCVIGNGVVLDPEVFIMEITKLKANGYLKDDKMLLLSEALHIIMPYHKRIDIAREKKSGSKKIGTTGRGIGPAYEDKIGRRGIRLMDLLDEKAFTRKVKEVLEEKNLILTQLLGEQPFTFEEIYEEYMKYAETLRKYAADTSLILHQEIKAGKSLLFEGAQGTLLDVDHGTYPYVTSSSTCSGGACTGSGVSPREIHEVIGISKAYATRVGSGPFPTELEDETGEQLRQAGREFGSTTGRPRRTGWYDALVARYAVRINGLSGIAITKLDVLSGQETVKVCTAYNYKGQVLTEVPASLEVMELCTPIYEELPGWNEDITGAKSMAELPKNARDYVARVEELSGAPVVLVSVGPRRDETIVLRNPFQLD.

GTP is bound by residues 12–18 (GDEGKGK) and 40–42 (GHT). Asp13 acts as the Proton acceptor in catalysis. Asp13 and Gly40 together coordinate Mg(2+). Residues 13 to 16 (DEGK), 38 to 41 (NAGH), Thr130, Arg144, Gln225, Thr240, and Arg304 contribute to the IMP site. His41 (proton donor) is an active-site residue. 300–306 (STTGRPR) contacts substrate. GTP-binding positions include Arg306, 332 to 334 (KLD), and 414 to 416 (SVG).

Belongs to the adenylosuccinate synthetase family. As to quaternary structure, homodimer. Mg(2+) serves as cofactor.

It is found in the cytoplasm. The catalysed reaction is IMP + L-aspartate + GTP = N(6)-(1,2-dicarboxyethyl)-AMP + GDP + phosphate + 2 H(+). Its pathway is purine metabolism; AMP biosynthesis via de novo pathway; AMP from IMP: step 1/2. Functionally, plays an important role in the de novo pathway of purine nucleotide biosynthesis. Catalyzes the first committed step in the biosynthesis of AMP from IMP. The polypeptide is Adenylosuccinate synthetase (Geobacter sp. (strain M21)).